The following is a 383-amino-acid chain: Acetylornithine deacetylase (383 aa).

His-80 provides a ligand contact to Zn(2+). Residue Asp-82 is part of the active site. Position 112 (Asp-112) interacts with Zn(2+). Glu-144 is a catalytic residue. Zn(2+)-binding residues include Glu-145, Glu-169, and His-355.

It belongs to the peptidase M20A family. ArgE subfamily. In terms of assembly, homodimer. The cofactor is Zn(2+). Co(2+) serves as cofactor. Glutathione is required as a cofactor.

The protein localises to the cytoplasm. It carries out the reaction N(2)-acetyl-L-ornithine + H2O = L-ornithine + acetate. Its pathway is amino-acid biosynthesis; L-arginine biosynthesis; L-ornithine from N(2)-acetyl-L-ornithine (linear): step 1/1. Functionally, catalyzes the hydrolysis of the amide bond of N(2)-acetylated L-amino acids. Cleaves the acetyl group from N-acetyl-L-ornithine to form L-ornithine, an intermediate in L-arginine biosynthesis pathway, and a branchpoint in the synthesis of polyamines. This chain is Acetylornithine deacetylase, found in Shigella boydii serotype 18 (strain CDC 3083-94 / BS512).